We begin with the raw amino-acid sequence, 299 residues long: NAD kinase (299 aa).

Asp64 acts as the Proton acceptor in catalysis. NAD(+) contacts are provided by residues 64-65 (DG), 138-139 (ND), Arg149, Arg166, Asp168, 179-184 (TGYAVS), and Gln238.

The protein belongs to the NAD kinase family. It depends on a divalent metal cation as a cofactor.

The protein localises to the cytoplasm. It catalyses the reaction NAD(+) + ATP = ADP + NADP(+) + H(+). Involved in the regulation of the intracellular balance of NAD and NADP, and is a key enzyme in the biosynthesis of NADP. Catalyzes specifically the phosphorylation on 2'-hydroxyl of the adenosine moiety of NAD to yield NADP. The sequence is that of NAD kinase from Nitratidesulfovibrio vulgaris (strain ATCC 29579 / DSM 644 / CCUG 34227 / NCIMB 8303 / VKM B-1760 / Hildenborough) (Desulfovibrio vulgaris).